The sequence spans 180 residues: Acireductone dioxygenase (180 aa).

Fe(2+)-binding residues include H97, H99, E103, and H141. Ni(2+) contacts are provided by H97, H99, E103, and H141.

The protein belongs to the acireductone dioxygenase (ARD) family. As to quaternary structure, monomer. Fe(2+) is required as a cofactor. It depends on Mg(2+) as a cofactor. Ni(2+) serves as cofactor. Requires Mn(2+) as cofactor. The cofactor is Co(2+).

The enzyme catalyses 1,2-dihydroxy-5-(methylsulfanyl)pent-1-en-3-one + O2 = 3-(methylsulfanyl)propanoate + CO + formate + 2 H(+). The catalysed reaction is 1,2-dihydroxy-5-(methylsulfanyl)pent-1-en-3-one + O2 = 4-methylsulfanyl-2-oxobutanoate + formate + 2 H(+). It participates in amino-acid biosynthesis; L-methionine biosynthesis via salvage pathway; L-methionine from S-methyl-5-thio-alpha-D-ribose 1-phosphate: step 5/6. In terms of biological role, catalyzes 2 different reactions between oxygen and the acireductone 1,2-dihydroxy-3-keto-5-methylthiopentene (DHK-MTPene) depending upon the metal bound in the active site. Fe-containing acireductone dioxygenase (Fe-ARD) produces formate and 2-keto-4-methylthiobutyrate (KMTB), the alpha-ketoacid precursor of methionine in the methionine recycle pathway. Ni-containing acireductone dioxygenase (Ni-ARD) produces methylthiopropionate, carbon monoxide and formate, and does not lie on the methionine recycle pathway. In Klebsiella oxytoca, this protein is Acireductone dioxygenase (mtnD).